The sequence spans 302 residues: Protein ECM11 (302 aa).

Disordered stretches follow at residues 1–67 and 162–187; these read MTVI…TDKQ and SLNG…GSYQ. A compositionally biased stretch (polar residues) spans 35–46; sequence NKPPSSINSRSG. Residues 56–67 show a composition bias toward basic and acidic residues; sequence APEKKINNTDKQ. Positions 162-171 are enriched in polar residues; it reads SLNGENTSSP.

As to quaternary structure, interacts with CDC6.

Its subcellular location is the nucleus. In terms of biological role, may be involved in cell wall organization and biogenesis. The sequence is that of Protein ECM11 (ECM11) from Saccharomyces cerevisiae (strain ATCC 204508 / S288c) (Baker's yeast).